Here is a 388-residue protein sequence, read N- to C-terminus: Ferrochelatase (388 aa).

2 residues coordinate Fe cation: His-197 and Glu-278.

It belongs to the ferrochelatase family.

It localises to the cytoplasm. It catalyses the reaction heme b + 2 H(+) = protoporphyrin IX + Fe(2+). Its pathway is porphyrin-containing compound metabolism; protoheme biosynthesis; protoheme from protoporphyrin-IX: step 1/1. Catalyzes the ferrous insertion into protoporphyrin IX. The protein is Ferrochelatase of Thermosynechococcus vestitus (strain NIES-2133 / IAM M-273 / BP-1).